A 314-amino-acid chain; its full sequence is Testis-specific Y-encoded protein 9 (314 aa).

The protein belongs to the nucleosome assembly protein (NAP) family.

Its subcellular location is the cytoplasm. It is found in the nucleus. May be involved in sperm differentiation and proliferation. This Homo sapiens (Human) protein is Testis-specific Y-encoded protein 9.